We begin with the raw amino-acid sequence, 32 residues long: GILSSIKGVAKGVAKNVAAQLLDTLKCKITGC.

Cysteine 27 and cysteine 32 are disulfide-bonded.

Expressed by the skin glands.

It is found in the secreted. Antibacterial activity against Gram-positive bacterium S.aureus and Gram-negative bacterium E.coli. Has activity against C.albicans. This Rana luteiventris (Columbia spotted frog) protein is Ranatuerin-2Lb.